Consider the following 191-residue polypeptide: Ribonuclease HII (191 aa).

The region spanning 16–191 is the RNase H type-2 domain; it reads INLIGIDEAG…KLHRKSFKLL (176 aa). A divalent metal cation contacts are provided by aspartate 22, glutamate 23, and aspartate 110.

It belongs to the RNase HII family. Mn(2+) serves as cofactor. Mg(2+) is required as a cofactor.

Its subcellular location is the cytoplasm. It catalyses the reaction Endonucleolytic cleavage to 5'-phosphomonoester.. Its function is as follows. Endonuclease that specifically degrades the RNA of RNA-DNA hybrids. The chain is Ribonuclease HII (rnhB) from Campylobacter jejuni subsp. jejuni serotype O:2 (strain ATCC 700819 / NCTC 11168).